The chain runs to 358 residues: Heat-inducible transcription repressor HrcA (358 aa).

This sequence belongs to the HrcA family.

Its function is as follows. Negative regulator of class I heat shock genes (grpE-dnaK-dnaJ and groELS operons). Prevents heat-shock induction of these operons. This is Heat-inducible transcription repressor HrcA from Caulobacter vibrioides (strain NA1000 / CB15N) (Caulobacter crescentus).